The following is a 650-amino-acid chain: tRNA-dihydrouridine(47) synthase [NAD(P)(+)]-like (650 aa).

Disordered stretches follow at residues 1-24 and 46-120; these read MAEG…GALE and EAKG…NYDK. N-acetylalanine is present on alanine 2. 2 stretches are compositionally biased toward basic and acidic residues: residues 48 to 58 and 70 to 79; these read KGQEKTCRETE and PEAKRIRLED. Residues 101 to 113 show a composition bias toward basic residues; sequence KRARGQNKGRPHV. 2 C3H1-type zinc fingers span residues 118–148 and 156–186; these read YDKN…HDVG and ADLG…HLRP. Residues 235-284 form a disordered region; that stretch reads FSQGPTPAAAVPEGTAAEGAPRQENCGAQQVPAGPGTSTPPSSPVRTCGP. Serine 236 is modified (phosphoserine). Threonine 273 bears the Phosphothreonine mark. A phosphoserine mark is found at serine 276 and serine 277. Residues 311–313 and glutamine 365 each bind FMN; that span reads PLT. Cysteine 396 (proton donor) is an active-site residue. Lysine 416 participates in a covalent cross-link: Glycyl lysine isopeptide (Lys-Gly) (interchain with G-Cter in SUMO2). FMN is bound by residues lysine 435, histidine 465, 497–499, and 520–521; these read NGD and AR.

This sequence belongs to the Dus family. Dus3 subfamily. It depends on FMN as a cofactor.

It catalyses the reaction 5,6-dihydrouridine(47) in tRNA + NAD(+) = uridine(47) in tRNA + NADH + H(+). The catalysed reaction is 5,6-dihydrouridine(47) in tRNA + NADP(+) = uridine(47) in tRNA + NADPH + H(+). The enzyme catalyses a 5,6-dihydrouridine in mRNA + NAD(+) = a uridine in mRNA + NADH + H(+). It carries out the reaction a 5,6-dihydrouridine in mRNA + NADP(+) = a uridine in mRNA + NADPH + H(+). Its function is as follows. Catalyzes the synthesis of dihydrouridine, a modified base, in various RNAs, such as tRNAs, mRNAs and some long non-coding RNAs (lncRNAs). Mainly modifies the uridine in position 47 (U47) in the D-loop of most cytoplasmic tRNAs. Also able to mediate the formation of dihydrouridine in some mRNAs, thereby regulating their translation. In Homo sapiens (Human), this protein is tRNA-dihydrouridine(47) synthase [NAD(P)(+)]-like.